Here is an 860-residue protein sequence, read N- to C-terminus: Leucine--tRNA ligase (860 aa).

Positions 42 to 52 (PYPSGRLHMGH) match the 'HIGH' region motif. The 'KMSKS' region signature appears at 619–623 (KMSKS). Residue Lys622 coordinates ATP.

The protein belongs to the class-I aminoacyl-tRNA synthetase family.

The protein resides in the cytoplasm. The enzyme catalyses tRNA(Leu) + L-leucine + ATP = L-leucyl-tRNA(Leu) + AMP + diphosphate. The protein is Leucine--tRNA ligase of Mannheimia succiniciproducens (strain KCTC 0769BP / MBEL55E).